The sequence spans 90 residues: RNA-binding protein Hfq (90 aa).

The region spanning 9 to 68 is the Sm domain; it reads EPFLNTLRKEKVPVSIYLVNGIKLQGQIESFDQFVVLLRNNVNQMVYKHAISTIVPARRV.

It belongs to the Hfq family. In terms of assembly, homohexamer.

Its function is as follows. RNA chaperone that binds small regulatory RNA (sRNAs) and mRNAs to facilitate mRNA translational regulation in response to envelope stress, environmental stress and changes in metabolite concentrations. Also binds with high specificity to tRNAs. This is RNA-binding protein Hfq from Halorhodospira halophila (strain DSM 244 / SL1) (Ectothiorhodospira halophila (strain DSM 244 / SL1)).